We begin with the raw amino-acid sequence, 151 residues long: Globin CTT-VIII (151 aa).

In terms of domain architecture, Globin spans 4-148 (PMSADQLALF…MFFYILHALE (145 aa)). Residues H62 and H97 each coordinate heme b.

Belongs to the globin family. As to quaternary structure, homodimer.

This chain is Globin CTT-VIII (CTT-8), found in Chironomus thummi thummi (Midge).